We begin with the raw amino-acid sequence, 471 residues long: UDP-glycosyltransferase 71A15 (471 aa).

Residues Ser-282, 348 to 349 (WA), 366 to 374 (HCGWNSTLE), and 388 to 391 (YAEQ) contribute to the UDP-alpha-D-glucose site.

This sequence belongs to the UDP-glycosyltransferase family.

Glycosyltransferase that possesses chalcone and flavonol 2'-O-glycosyltransferase activity. Converts phloretin to phlorizin (phloretin 2'-O-glucoside), a potent antioxidant. Possesses glycosyltransferase activity toward, naringenin, naringenin chalcone, eriodictyol, eriodictyol chalcone, apigenin, luteolin, kaempferol, quercetin, isoliquiritigenin, butein and caffeic acid. Can convert phloretin to phloretin 4'-O-glucoside and phloretin 4-O-glucoside. This Malus domestica (Apple) protein is UDP-glycosyltransferase 71A15.